A 185-amino-acid polypeptide reads, in one-letter code: Recombination protein RecR (185 aa).

Residues 44–59 (CSVCFHLSSEPVCEIC) form a C4-type zinc finger. A Toprim domain is found at 67–161 (NTICVVADSR…KVTRIAFGLP (95 aa)).

The protein belongs to the RecR family.

Its function is as follows. May play a role in DNA repair. It seems to be involved in an RecBC-independent recombinational process of DNA repair. It may act with RecF and RecO. The polypeptide is Recombination protein RecR (Trichormus variabilis (strain ATCC 29413 / PCC 7937) (Anabaena variabilis)).